A 543-amino-acid chain; its full sequence is Heparanase-like protein 1 (543 aa).

The first 24 residues, 1–24 (MGFRVCVIVVFLGCLLLVPEKTMA), serve as a signal peptide directing secretion. A glycan (N-linked (GlcNAc...) asparagine) is linked at Asn-184. Glu-201 (proton donor) is an active-site residue. The N-linked (GlcNAc...) asparagine glycan is linked to Asn-304. The active-site Nucleophile is the Glu-320. N-linked (GlcNAc...) asparagine glycans are attached at residues Asn-425 and Asn-428.

Belongs to the glycosyl hydrolase 79 family.

It localises to the lysosome membrane. Its subcellular location is the secreted. Functionally, endoglycosidase which is a cell surface and extracellular matrix-degrading enzyme. Cleaves heparan sulfate proteoglycans (HSPGs) into heparan sulfate side chains and core proteoglycans. This Arabidopsis thaliana (Mouse-ear cress) protein is Heparanase-like protein 1.